The following is a 154-amino-acid chain: Large ribosomal subunit protein uL15 (154 aa).

The tract at residues 1-61 is disordered; sequence MDLSTLKPVA…GGQMPLMRRM (61 aa).

It belongs to the universal ribosomal protein uL15 family. Part of the 50S ribosomal subunit.

Functionally, binds to the 23S rRNA. In Oenococcus oeni (strain ATCC BAA-331 / PSU-1), this protein is Large ribosomal subunit protein uL15.